Here is a 75-residue protein sequence, read N- to C-terminus: Small, acid-soluble spore protein Tlp (75 aa).

It belongs to the Tlp family.

The protein localises to the spore core. The sequence is that of Small, acid-soluble spore protein Tlp from Geobacillus thermodenitrificans (strain NG80-2).